A 153-amino-acid polypeptide reads, in one-letter code: Transcriptional repressor NrdR (153 aa).

A zinc finger lies at 3 to 34 (CPFCGKENTRVIDSRPADDCSSIRRRRQCDEC). Positions 49–139 (LVVIKKDNNR…VYREFKDVNT (91 aa)) constitute an ATP-cone domain.

The protein belongs to the NrdR family. Zn(2+) serves as cofactor.

Functionally, negatively regulates transcription of bacterial ribonucleotide reductase nrd genes and operons by binding to NrdR-boxes. This chain is Transcriptional repressor NrdR, found in Lachnoclostridium phytofermentans (strain ATCC 700394 / DSM 18823 / ISDg) (Clostridium phytofermentans).